A 493-amino-acid chain; its full sequence is Lysine--tRNA ligase (493 aa).

Positions 402 and 409 each coordinate Mg(2+).

It belongs to the class-II aminoacyl-tRNA synthetase family. As to quaternary structure, homodimer. Mg(2+) serves as cofactor.

The protein localises to the cytoplasm. The catalysed reaction is tRNA(Lys) + L-lysine + ATP = L-lysyl-tRNA(Lys) + AMP + diphosphate. This chain is Lysine--tRNA ligase, found in Fusobacterium nucleatum subsp. nucleatum (strain ATCC 25586 / DSM 15643 / BCRC 10681 / CIP 101130 / JCM 8532 / KCTC 2640 / LMG 13131 / VPI 4355).